The chain runs to 311 residues: MADVLSVGVNLEAFSQAISAIQALRSSVSRVFDCLKDGMRNKETLEGREKAFIANFQDNLHSVNRDLNELERLSNLVGKPSENHPLHNSGLLSLDPVQDKTPLYSQLLQAYKWSNKLQYHAGLASGLLNQQSLKRSANQMGVSAKRRPKAQPTTLVLPPQYVDDVISRIDRMFPEMSIHLSRPNGTSAMLLVTLGKVLKVIVVMRSLFIDRTIVKGYNESVYTEDGKLDIWSKSSYQVFQKVTDHATTALLHYQLPQMPDVVVRSFMTWLRSYIKLFQAPCQRCGKFLQDGLPPTWRDFRTLEAFHDTCRQ.

Position 132 is a phosphoserine (Ser132). The residue at position 134 (Lys134) is an N6-methyllysine.

The protein belongs to the Mediator complex subunit 27 family. As to quaternary structure, component of the Mediator complex, which is composed of MED1, MED4, MED6, MED7, MED8, MED9, MED10, MED11, MED12, MED13, MED13L, MED14, MED15, MED16, MED17, MED18, MED19, MED20, MED21, MED22, MED23, MED24, MED25, MED26, MED27, MED29, MED30, MED31, CCNC, CDK8 and CDC2L6/CDK11. The MED12, MED13, CCNC and CDK8 subunits form a distinct module termed the CDK8 module. Mediator containing the CDK8 module is less active than Mediator lacking this module in supporting transcriptional activation. Individual preparations of the Mediator complex lacking one or more distinct subunits have been variously termed ARC, CRSP, DRIP, PC2, SMCC and TRAP.

Its subcellular location is the nucleus. Its function is as follows. Component of the Mediator complex, a coactivator involved in the regulated transcription of nearly all RNA polymerase II-dependent genes. Mediator functions as a bridge to convey information from gene-specific regulatory proteins to the basal RNA polymerase II transcription machinery. Mediator is recruited to promoters by direct interactions with regulatory proteins and serves as a scaffold for the assembly of a functional preinitiation complex with RNA polymerase II and the general transcription factors. The chain is Mediator of RNA polymerase II transcription subunit 27 (Med27) from Mus musculus (Mouse).